Consider the following 346-residue polypeptide: KH domain-containing, RNA-binding, signal transduction-associated protein 2 (346 aa).

In terms of domain architecture, KH spans 65 to 131 (LIPVQQYPKF…AKYAHLSNDL (67 aa)). The interval 175-291 (LSYLNGSDDP…SYESYDDNYS (117 aa)) is disordered. Residues 195–224 (LRLTSTASPRGRGSAAPPAPPGRGAAAPRG) show a composition bias toward low complexity. The segment covering 268-287 (YGYDDGYDGEYDDQSYESYD) has biased composition (acidic residues).

Belongs to the KHDRBS family.

It is found in the nucleus. Its function is as follows. RNA-binding protein that plays a role in the regulation of alternative splicing. The protein is KH domain-containing, RNA-binding, signal transduction-associated protein 2 (khdrbs2) of Danio rerio (Zebrafish).